Reading from the N-terminus, the 217-residue chain is uncharacterized protein (217 aa).

The N-terminal stretch at 1 to 24 (MRYTVLIALQGALLLLLLIDDGQG) is a signal peptide.

This is an uncharacterized protein from Aedes vexans (Inland floodwater mosquito).